The sequence spans 195 residues: Shikimate kinase (195 aa).

33 to 38 is an ATP binding site; that stretch reads GAGKTT. Thr37 contacts Mg(2+). Positions 55, 79, and 101 each coordinate substrate. An ATP-binding site is contributed by Arg139. Residue Arg158 coordinates substrate. Arg175 provides a ligand contact to ATP.

Belongs to the shikimate kinase family. As to quaternary structure, monomer. Requires Mg(2+) as cofactor.

The protein localises to the cytoplasm. The enzyme catalyses shikimate + ATP = 3-phosphoshikimate + ADP + H(+). The protein operates within metabolic intermediate biosynthesis; chorismate biosynthesis; chorismate from D-erythrose 4-phosphate and phosphoenolpyruvate: step 5/7. In terms of biological role, catalyzes the specific phosphorylation of the 3-hydroxyl group of shikimic acid using ATP as a cosubstrate. The chain is Shikimate kinase from Nitrosospira multiformis (strain ATCC 25196 / NCIMB 11849 / C 71).